The chain runs to 202 residues: Arenicin-2 (202 aa).

Residues 1 to 25 (MTSTQSVAVYATLILAIFCFNDIHC) form the signal peptide. The propeptide occupies 26-181 (DPIAEARAAA…SGDNNEPEKR (156 aa)). The 96-residue stretch at 73–168 (GDGVEGSVMV…ACQGKSVYWL (96 aa)) folds into the BRICHOS domain. 2 cysteine pairs are disulfide-bonded: Cys100–Cys160 and Cys184–Cys201.

In terms of biological role, has antimicrobial activity against the Gram-negative bacteria E.coli and P.mirabilis, the Gram-positive bacterium L.monocytogenes and the yeast C.albicans. The protein is Arenicin-2 of Arenicola marina (Lugworm).